The sequence spans 115 residues: Large ribosomal subunit protein P2 (115 aa).

At Met-1 the chain carries N-acetylmethionine. 2 positions are modified to phosphoserine: Ser-17 and Ser-19. The residue at position 21 (Lys-21) is an N6-acetyllysine; alternate. N6-succinyllysine; alternate is present on Lys-21. Residues 78–90 (GSAAPAAGSAPAA) show a composition bias toward low complexity. The tract at residues 78 to 115 (GSAAPAAGSAPAAAEEKKDEKKEESEESDDDMGFGLFD) is disordered. Residues Ser-79 and Ser-86 each carry the phosphoserine modification. The span at 91–101 (AEEKKDEKKEE) shows a compositional bias: basic and acidic residues. A phosphoserine mark is found at Ser-102 and Ser-105.

This sequence belongs to the eukaryotic ribosomal protein P1/P2 family. As to quaternary structure, heterodimer with P1 at the lateral ribosomal stalk of the large ribosomal subunit.

Its function is as follows. Plays an important role in the elongation step of protein synthesis. In Homo sapiens (Human), this protein is Large ribosomal subunit protein P2 (RPLP2).